The sequence spans 905 residues: Protein translocase subunit SecA (905 aa).

ATP is bound by residues Gln86, 104-108, and Asp499; that span reads GEGKT. Residues Cys890, Cys892, Cys901, and His902 each coordinate Zn(2+).

The protein belongs to the SecA family. As to quaternary structure, monomer and homodimer. Part of the essential Sec protein translocation apparatus which comprises SecA, SecYEG and auxiliary proteins SecDF-YajC and YidC. Zn(2+) is required as a cofactor.

The protein localises to the cell inner membrane. It is found in the cytoplasm. The enzyme catalyses ATP + H2O + cellular proteinSide 1 = ADP + phosphate + cellular proteinSide 2.. In terms of biological role, part of the Sec protein translocase complex. Interacts with the SecYEG preprotein conducting channel. Has a central role in coupling the hydrolysis of ATP to the transfer of proteins into and across the cell membrane, serving both as a receptor for the preprotein-SecB complex and as an ATP-driven molecular motor driving the stepwise translocation of polypeptide chains across the membrane. In Rickettsia typhi (strain ATCC VR-144 / Wilmington), this protein is Protein translocase subunit SecA.